The sequence spans 396 residues: Elongation factor Tu 2 (396 aa).

The 197-residue stretch at 10–206 (KPHINVGTIG…VLDSYIPEPQ (197 aa)) folds into the tr-type G domain. A G1 region spans residues 19–26 (GHVDHGKT). Residue 19 to 26 (GHVDHGKT) coordinates GTP. Residue T26 participates in Mg(2+) binding. The tract at residues 60–64 (GITIN) is G2. The segment at 81-84 (DCPG) is G3. Residues 81 to 85 (DCPGH) and 136 to 139 (NKAD) each bind GTP. The interval 136–139 (NKAD) is G4. Positions 174-176 (SAL) are G5.

Belongs to the TRAFAC class translation factor GTPase superfamily. Classic translation factor GTPase family. EF-Tu/EF-1A subfamily. In terms of assembly, monomer.

It is found in the cytoplasm. The enzyme catalyses GTP + H2O = GDP + phosphate + H(+). GTP hydrolase that promotes the GTP-dependent binding of aminoacyl-tRNA to the A-site of ribosomes during protein biosynthesis. The protein is Elongation factor Tu 2 of Nitrosomonas eutropha (strain DSM 101675 / C91 / Nm57).